The primary structure comprises 264 residues: S-adenosylmethionine decarboxylase proenzyme (264 aa).

The Schiff-base intermediate with substrate; via pyruvic acid role is filled by S112. Residue S112 is modified to Pyruvic acid (Ser); by autocatalysis. Residue H117 is the Proton acceptor; for processing activity of the active site. C140 acts as the Proton donor; for catalytic activity in catalysis.

It belongs to the prokaryotic AdoMetDC family. Type 2 subfamily. Heterooctamer of four alpha and four beta chains arranged as a tetramer of alpha/beta heterodimers. Pyruvate is required as a cofactor. In terms of processing, is synthesized initially as an inactive proenzyme. Formation of the active enzyme involves a self-maturation process in which the active site pyruvoyl group is generated from an internal serine residue via an autocatalytic post-translational modification. Two non-identical subunits are generated from the proenzyme in this reaction, and the pyruvate is formed at the N-terminus of the alpha chain, which is derived from the carboxyl end of the proenzyme. The post-translation cleavage follows an unusual pathway, termed non-hydrolytic serinolysis, in which the side chain hydroxyl group of the serine supplies its oxygen atom to form the C-terminus of the beta chain, while the remainder of the serine residue undergoes an oxidative deamination to produce ammonia and the pyruvoyl group blocking the N-terminus of the alpha chain.

It carries out the reaction S-adenosyl-L-methionine + H(+) = S-adenosyl 3-(methylsulfanyl)propylamine + CO2. It functions in the pathway amine and polyamine biosynthesis; S-adenosylmethioninamine biosynthesis; S-adenosylmethioninamine from S-adenosyl-L-methionine: step 1/1. Catalyzes the decarboxylation of S-adenosylmethionine to S-adenosylmethioninamine (dcAdoMet), the propylamine donor required for the synthesis of the polyamines spermine and spermidine from the diamine putrescine. The chain is S-adenosylmethionine decarboxylase proenzyme from Yersinia enterocolitica serotype O:8 / biotype 1B (strain NCTC 13174 / 8081).